The chain runs to 210 residues: Putative 3-methyladenine DNA glycosylase (210 aa).

It belongs to the DNA glycosylase MPG family.

In Corynebacterium glutamicum (strain R), this protein is Putative 3-methyladenine DNA glycosylase.